Reading from the N-terminus, the 162-residue chain is Ribosome maturation factor RimP (162 aa).

The protein belongs to the RimP family.

It is found in the cytoplasm. Required for maturation of 30S ribosomal subunits. In Beutenbergia cavernae (strain ATCC BAA-8 / DSM 12333 / CCUG 43141 / JCM 11478 / NBRC 16432 / NCIMB 13614 / HKI 0122), this protein is Ribosome maturation factor RimP.